The following is a 97-amino-acid chain: MPTKTVVENDVEIIMPKLYKVMLLNDDYTTFDFVIEILKTVFHKNEEEAINITLKVDREGSAAVGVYPYEIAQVKIEKTHTLARQAGYPLRAVMEEV.

It belongs to the ClpS family. As to quaternary structure, binds to the N-terminal domain of the chaperone ClpA.

Its function is as follows. Involved in the modulation of the specificity of the ClpAP-mediated ATP-dependent protein degradation. The protein is ATP-dependent Clp protease adapter protein ClpS of Nautilia profundicola (strain ATCC BAA-1463 / DSM 18972 / AmH).